The following is a 275-amino-acid chain: Hydroxyethylthiazole kinase (275 aa).

Met50 is a substrate binding site. Residues Arg126 and Ser171 each contribute to the ATP site. Position 200 (Ala200) interacts with substrate.

It belongs to the Thz kinase family. Mg(2+) serves as cofactor.

The catalysed reaction is 5-(2-hydroxyethyl)-4-methylthiazole + ATP = 4-methyl-5-(2-phosphooxyethyl)-thiazole + ADP + H(+). Its pathway is cofactor biosynthesis; thiamine diphosphate biosynthesis; 4-methyl-5-(2-phosphoethyl)-thiazole from 5-(2-hydroxyethyl)-4-methylthiazole: step 1/1. Functionally, catalyzes the phosphorylation of the hydroxyl group of 4-methyl-5-beta-hydroxyethylthiazole (THZ). This Acinetobacter baumannii (strain ACICU) protein is Hydroxyethylthiazole kinase.